Reading from the N-terminus, the 92-residue chain is Small ribosomal subunit protein uS19 (92 aa).

Belongs to the universal ribosomal protein uS19 family.

In terms of biological role, protein S19 forms a complex with S13 that binds strongly to the 16S ribosomal RNA. The polypeptide is Small ribosomal subunit protein uS19 (Buchnera aphidicola subsp. Schizaphis graminum (strain Sg)).